The primary structure comprises 191 residues: dCTP deaminase (191 aa).

DCTP-binding positions include 112–117 (KSTYAR), 136–138 (TLE), Gln157, Tyr173, and Gln183. Glu138 (proton donor/acceptor) is an active-site residue.

Belongs to the dCTP deaminase family. As to quaternary structure, homotrimer.

It catalyses the reaction dCTP + H2O + H(+) = dUTP + NH4(+). It functions in the pathway pyrimidine metabolism; dUMP biosynthesis; dUMP from dCTP (dUTP route): step 1/2. Functionally, catalyzes the deamination of dCTP to dUTP. In Xylella fastidiosa (strain M12), this protein is dCTP deaminase.